A 270-amino-acid chain; its full sequence is Formamidopyrimidine-DNA glycosylase (270 aa).

Pro-2 serves as the catalytic Schiff-base intermediate with DNA. Glu-3 (proton donor) is an active-site residue. The active-site Proton donor; for beta-elimination activity is the Lys-58. Residues His-90, Arg-109, and Arg-152 each contribute to the DNA site. The FPG-type zinc-finger motif lies at 237–270; it reads RVYGREGEACECGGAIVRVVQSGRSTFYCRKCQR. Arg-260 functions as the Proton donor; for delta-elimination activity in the catalytic mechanism.

The protein belongs to the FPG family. As to quaternary structure, monomer. Zn(2+) is required as a cofactor.

It carries out the reaction Hydrolysis of DNA containing ring-opened 7-methylguanine residues, releasing 2,6-diamino-4-hydroxy-5-(N-methyl)formamidopyrimidine.. The enzyme catalyses 2'-deoxyribonucleotide-(2'-deoxyribose 5'-phosphate)-2'-deoxyribonucleotide-DNA = a 3'-end 2'-deoxyribonucleotide-(2,3-dehydro-2,3-deoxyribose 5'-phosphate)-DNA + a 5'-end 5'-phospho-2'-deoxyribonucleoside-DNA + H(+). Its function is as follows. Involved in base excision repair of DNA damaged by oxidation or by mutagenic agents. Acts as a DNA glycosylase that recognizes and removes damaged bases. Has a preference for oxidized purines, such as 7,8-dihydro-8-oxoguanine (8-oxoG). Has AP (apurinic/apyrimidinic) lyase activity and introduces nicks in the DNA strand. Cleaves the DNA backbone by beta-delta elimination to generate a single-strand break at the site of the removed base with both 3'- and 5'-phosphates. This chain is Formamidopyrimidine-DNA glycosylase, found in Sphingopyxis alaskensis (strain DSM 13593 / LMG 18877 / RB2256) (Sphingomonas alaskensis).